The sequence spans 364 residues: tRNA 2-selenouridine synthase (364 aa).

In terms of domain architecture, Rhodanese spans 15-138 (FVNDTPLMDM…LRRFLIETID (124 aa)). Cys98 serves as the catalytic S-selanylcysteine intermediate.

The protein belongs to the SelU family. In terms of assembly, monomer.

The enzyme catalyses 5-methylaminomethyl-2-thiouridine(34) in tRNA + selenophosphate + (2E)-geranyl diphosphate + H2O + H(+) = 5-methylaminomethyl-2-selenouridine(34) in tRNA + (2E)-thiogeraniol + phosphate + diphosphate. The catalysed reaction is 5-methylaminomethyl-2-thiouridine(34) in tRNA + (2E)-geranyl diphosphate = 5-methylaminomethyl-S-(2E)-geranyl-thiouridine(34) in tRNA + diphosphate. It catalyses the reaction 5-methylaminomethyl-S-(2E)-geranyl-thiouridine(34) in tRNA + selenophosphate + H(+) = 5-methylaminomethyl-2-(Se-phospho)selenouridine(34) in tRNA + (2E)-thiogeraniol. It carries out the reaction 5-methylaminomethyl-2-(Se-phospho)selenouridine(34) in tRNA + H2O = 5-methylaminomethyl-2-selenouridine(34) in tRNA + phosphate. Its function is as follows. Involved in the post-transcriptional modification of the uridine at the wobble position (U34) of tRNA(Lys), tRNA(Glu) and tRNA(Gln). Catalyzes the conversion of 2-thiouridine (S2U-RNA) to 2-selenouridine (Se2U-RNA). Acts in a two-step process involving geranylation of 2-thiouridine (S2U) to S-geranyl-2-thiouridine (geS2U) and subsequent selenation of the latter derivative to 2-selenouridine (Se2U) in the tRNA chain. This chain is tRNA 2-selenouridine synthase, found in Photobacterium profundum (strain SS9).